Reading from the N-terminus, the 453-residue chain is Putative receptor-like protein kinase At2g30940 (453 aa).

Residues 60 to 80 (ASASIAFLLVLIISVLLCFIF) traverse the membrane as a helical segment. The residue at position 155 (threonine 155) is a Phosphothreonine. Positions 166-428 (FADDNVITKG…IHMLQPHDLL (263 aa)) constitute a Protein kinase domain. ATP-binding positions include 172-180 (ITKGDSSTV) and lysine 194. Tyrosine 240 carries the phosphotyrosine modification. Residue aspartate 293 is the Proton acceptor of the active site. Serine 297 is subject to Phosphoserine. The residue at position 322 (threonine 322) is a Phosphothreonine.

It belongs to the protein kinase superfamily.

Its subcellular location is the cell membrane. The enzyme catalyses L-seryl-[protein] + ATP = O-phospho-L-seryl-[protein] + ADP + H(+). It catalyses the reaction L-threonyl-[protein] + ATP = O-phospho-L-threonyl-[protein] + ADP + H(+). This Arabidopsis thaliana (Mouse-ear cress) protein is Putative receptor-like protein kinase At2g30940.